The chain runs to 257 residues: Type III pantothenate kinase (257 aa).

24–31 (MIGNSRLH) is an ATP binding site. Residues tyrosine 96 and 100–103 (GIDR) contribute to the substrate site. Aspartate 102 (proton acceptor) is an active-site residue. Aspartate 122 contacts K(+). Threonine 125 is a binding site for ATP. Threonine 180 provides a ligand contact to substrate.

The protein belongs to the type III pantothenate kinase family. Homodimer. NH4(+) serves as cofactor. It depends on K(+) as a cofactor.

Its subcellular location is the cytoplasm. The catalysed reaction is (R)-pantothenate + ATP = (R)-4'-phosphopantothenate + ADP + H(+). It participates in cofactor biosynthesis; coenzyme A biosynthesis; CoA from (R)-pantothenate: step 1/5. Catalyzes the phosphorylation of pantothenate (Pan), the first step in CoA biosynthesis. The protein is Type III pantothenate kinase of Synechocystis sp. (strain ATCC 27184 / PCC 6803 / Kazusa).